A 1397-amino-acid polypeptide reads, in one-letter code: DNA-directed RNA polymerase subunit beta' (1397 aa).

4 residues coordinate Zn(2+): C75, C77, C90, and C93. Residues D465, D467, and D469 each contribute to the Mg(2+) site. The Zn(2+) site is built by C819, C893, C900, and C903.

It belongs to the RNA polymerase beta' chain family. In terms of assembly, the RNAP catalytic core consists of 2 alpha, 1 beta, 1 beta' and 1 omega subunit. When a sigma factor is associated with the core the holoenzyme is formed, which can initiate transcription. The cofactor is Mg(2+). Zn(2+) serves as cofactor.

The enzyme catalyses RNA(n) + a ribonucleoside 5'-triphosphate = RNA(n+1) + diphosphate. Its function is as follows. DNA-dependent RNA polymerase catalyzes the transcription of DNA into RNA using the four ribonucleoside triphosphates as substrates. This Acinetobacter baumannii (strain ACICU) protein is DNA-directed RNA polymerase subunit beta'.